The following is a 1397-amino-acid chain: Clustered mitochondria protein homolog (1397 aa).

A TPR 1 repeat occupies 30–63; that stretch reads LPSFIDQKGDLKIPSHYEETITDLKLTLTVIPKT. Disordered regions lie at residues 158-203 and 526-555; these read TARG…LSRE and DAAP…DEEE. Basic and acidic residues predominate over residues 161-203; the sequence is GEAEKSDTNEEEQEQGKGKVGKPNEKESGETKETDSQPELSRE. The region spanning 368–640 is the Clu domain; the sequence is DSSRSQLMLI…RTTPRDIEFI (273 aa). One copy of the TPR 2 repeat lies at 559–595; the sequence is EKVLYGLSSDSQKILEDKSFEKPLKLLSEVFHLKPHG. Composition is skewed to basic and acidic residues over residues 686-703, 812-831, 839-860, and 1019-1033; these read EGKL…EEKS, EKVE…KERA, SDDK…NTES, and QREQ…NVEK. 3 disordered regions span residues 686–707, 812–869, and 1019–1050; these read EGKL…QIAL, EKVE…EEQP, and QREQ…PIEN. The span at 1034-1043 shows a compositional bias: basic residues; sequence KHSKKSKKKS. 2 TPR repeats span residues 1167 to 1200 and 1209 to 1242; these read IAAY…WTST and VNLL…CSHL. Polar residues-rich tracts occupy residues 1314–1338 and 1362–1373; these read AQSK…SQAS and PQSDPQIANQSV. The disordered stretch occupies residues 1314 to 1397; sequence AQSKKSPPPT…AKSKSKHTKA (84 aa). The segment covering 1375-1384 has biased composition (basic and acidic residues); sequence DILKFIEGKS. Over residues 1386 to 1397 the composition is skewed to basic residues; sequence PNAKSKSKHTKA.

The protein belongs to the CLU family. May associate with the eukaryotic translation initiation factor 3 (eIF-3) complex.

The protein resides in the cytoplasm. Its function is as follows. mRNA-binding protein involved in proper cytoplasmic distribution of mitochondria. This is Clustered mitochondria protein homolog from Lodderomyces elongisporus (strain ATCC 11503 / CBS 2605 / JCM 1781 / NBRC 1676 / NRRL YB-4239) (Yeast).